A 211-amino-acid polypeptide reads, in one-letter code: Methylthioribulose-1-phosphate dehydratase (211 aa).

Zn(2+) is bound by residues histidine 97 and histidine 99.

The protein belongs to the aldolase class II family. MtnB subfamily. In terms of assembly, homotetramer. Zn(2+) is required as a cofactor.

The enzyme catalyses 5-(methylsulfanyl)-D-ribulose 1-phosphate = 5-methylsulfanyl-2,3-dioxopentyl phosphate + H2O. It functions in the pathway amino-acid biosynthesis; L-methionine biosynthesis via salvage pathway; L-methionine from S-methyl-5-thio-alpha-D-ribose 1-phosphate: step 2/6. Functionally, catalyzes the dehydration of methylthioribulose-1-phosphate (MTRu-1-P) into 2,3-diketo-5-methylthiopentyl-1-phosphate (DK-MTP-1-P). The polypeptide is Methylthioribulose-1-phosphate dehydratase (Geobacillus thermodenitrificans (strain NG80-2)).